The primary structure comprises 291 residues: Glutathione S-transferase 2 (291 aa).

One can recognise a GST N-terminal domain in the interval 2-83; it reads SPVKVFGHPM…YILRKYGGTA (82 aa). Glutathione is bound by residues 41–42, 54–55, and 67–68; these read HK, KM, and KS. A GST C-terminal domain is found at 93–223; the sequence is GIEELAMVDV…RVCKHMPTEF (131 aa).

The protein belongs to the GST superfamily. Phi family.

It carries out the reaction RX + glutathione = an S-substituted glutathione + a halide anion + H(+). Conjugation of reduced glutathione to a wide number of exogenous and endogenous hydrophobic electrophiles. This chain is Glutathione S-transferase 2 (GSTA2), found in Triticum aestivum (Wheat).